Here is a 191-residue protein sequence, read N- to C-terminus: uncharacterized protein (191 aa).

The signal sequence occupies residues 1–22 (MKSLRLMLCAMPLMLTGCSTMS).

This is an uncharacterized protein from Escherichia coli (strain K12).